The sequence spans 1318 residues: Meiotically up-regulated gene 79 protein (1318 aa).

Disordered stretches follow at residues 177 to 198 (PVNS…SGSY), 208 to 227 (EEEL…IVVT), and 360 to 387 (PQAL…PPKG). The segment covering 364 to 384 (AAAESPTTKAPTTKAPTSEAP) has biased composition (low complexity). Positions 1049-1158 (MISYKKMVLS…WIHSLNFNAA (110 aa)) constitute a PH domain.

Its subcellular location is the nucleus. In terms of biological role, appears to have a role in sporulation. This is Meiotically up-regulated gene 79 protein (mug79) from Schizosaccharomyces pombe (strain 972 / ATCC 24843) (Fission yeast).